The sequence spans 430 residues: Probable carboxypeptidase AFLA_037450 (430 aa).

The first 16 residues, 1 to 16 (MKSIYSLVLCTALTAA), serve as a signal peptide directing secretion. Asn-84 carries N-linked (GlcNAc...) asparagine glycosylation. Asp-156 serves as a coordination point for Zn(2+). Glu-188 functions as the Proton acceptor in the catalytic mechanism. Glu-189 contacts Zn(2+). N-linked (GlcNAc...) asparagine glycosylation occurs at Asn-285.

The protein belongs to the peptidase M20A family. Requires Zn(2+) as cofactor.

It is found in the secreted. The chain is Probable carboxypeptidase AFLA_037450 from Aspergillus flavus (strain ATCC 200026 / FGSC A1120 / IAM 13836 / NRRL 3357 / JCM 12722 / SRRC 167).